The following is a 517-amino-acid chain: Cytochrome P450 monooxygenase cdmJ (517 aa).

The helical transmembrane segment at 15–35 (YMWSLTLFALCLSAILMFPFL) threads the bilayer. The N-linked (GlcNAc...) asparagine glycan is linked to N404. C451 is a binding site for heme.

This sequence belongs to the cytochrome P450 family. The cofactor is heme.

It is found in the membrane. The catalysed reaction is 3-hydroxypentacecilide A + NADPH + O2 + H(+) = chrodrimanin F + NADP(+) + H2O. It carries out the reaction chrodrimanin C + NADPH + O2 + H(+) = chrodrimanin H + NADP(+) + H2O. It catalyses the reaction verruculide A + NADPH + O2 + H(+) = chrodrimanin E + NADP(+) + H2O. The enzyme catalyses chrodrimanin T + NADPH + O2 + H(+) = chrodrimanin A + NADP(+) + H2O. It participates in secondary metabolite biosynthesis; terpenoid biosynthesis. Its function is as follows. Cytochrome P450 monooxygenase; part of the gene cluster that mediates the biosynthesis of chrodrimanin B, a meroterpenoid that acts as a potent blocker of insect GABA-gated chloride channels. The first step of the pathway is the biosynthesis of 6-hydroxymellein by the polyketide synthase cdmE. The prenyltransferase cdmH acts as a 6-hydroxymellein 5-farnesyltransferase and produces the hydrophobic metabolite verruculide C. The FAD-dependent monooxygenase cdmI further converts verruculide C into verruculide B. The terpene cyclase cdmG then produced the pentacyclic molecule 3-hydroxypentacecilide A, the backbone structure of chrodrimanin B, via folding the farnesyl moiety of the substrate into the chair-boat conformation. The short-chain dehydrogenase/reductase cdmF functions as the 3-OH dehydrogenase that oxidizes the C-3 hydroxyl group of 3-hydroxypentacecilide A and produces chrodrimanin C, the dehydrogenated product of 3-hydroxypentacecilide A. The cytochrome P450 monooxygenase cdmJ then accepts both 3-hydroxypentacecilide A and chrodrimanin C and functions as a C-7-beta-hydroxylase to produce respectively chrodrimanin H and chrodrimanin F. The dioxygenase cdmA accepts chrodrimanin H to afford chrodrimanin E, which is further transformed to chrodrimanin A by the dioxygenase cdmD. CdmA can also accept chrodrimanin C as substrate to convert it into verruculide A, which is further converted into chrodrimanin T by cdmD. The last step of the biosynthesis is proposed to be performed by the acetyltransferase cdmC which acetylates chrodrimanin A to yield chrodrimanin B. The pathway may also lead to the production of additional shunt products, including chrodrimanins T and U. The chain is Cytochrome P450 monooxygenase cdmJ from Talaromyces verruculosus (Penicillium verruculosum).